Consider the following 398-residue polypeptide: MKVFIVIMIIVVIFFALILLDIFMGRAGYRKKAYEPVFSKKKSDIELIHCGADLVERMMNDIRQAASSVHMMFFIMKNDEVSHNMYTLLKTKAQAGVSVYLLLDWAGCRAIKKTALQTMKNAGVHVHVMNRPRFPFFFFHMQKRNHRKITVIDGKIGYIGGFNIAEEYLGKKAKFGNWEDYHLRMIGEGVHDLQTLFASDLKRNTGIELGSDVWPKLQQGTISHKIYATDGYSLENIYLANIAQAKNRLTVCTPYYIPSKPLQEALINARKNGVSVRIIVPMKSDHPLVREAAFTYYSELLDAGCLIYRYYQGFYHVKALIIDDHLSIIGTANFDKRSLFLNEEVNVEIDDEAFTSEVYATIEEDMKKSELLTMEDFSKRTFRQRPAEWLGRALSYFL.

The helical transmembrane segment at 3–23 threads the bilayer; that stretch reads VFIVIMIIVVIFFALILLDIF. PLD phosphodiesterase domains lie at 141 to 168 and 311 to 338; these read MQKR…AEEY and YQGF…DKRS.

Belongs to the phospholipase D family. Cardiolipin synthase subfamily.

It localises to the cell membrane. In terms of biological role, involved in the biosynthesis of cardiolipin. The polypeptide is Minor cardiolipin synthase ClsB (clsB) (Bacillus subtilis (strain 168)).